The sequence spans 381 residues: RING-H2 finger protein ATL1 (381 aa).

A disordered region spans residues Met-1–Phe-31. Residues Ile-46–Ile-66 form a helical membrane-spanning segment. The RING-type; atypical zinc-finger motif lies at Cys-134 to Arg-176. Disordered regions lie at residues Thr-249 to Phe-269 and Arg-334 to Arg-354. A compositionally biased stretch (polar residues) spans Ser-250–Ser-261.

It belongs to the RING-type zinc finger family. ATL subfamily.

Its subcellular location is the membrane. It catalyses the reaction S-ubiquitinyl-[E2 ubiquitin-conjugating enzyme]-L-cysteine + [acceptor protein]-L-lysine = [E2 ubiquitin-conjugating enzyme]-L-cysteine + N(6)-ubiquitinyl-[acceptor protein]-L-lysine.. Its pathway is protein modification; protein ubiquitination. The polypeptide is RING-H2 finger protein ATL1 (ATL1) (Arabidopsis thaliana (Mouse-ear cress)).